Consider the following 426-residue polypeptide: D-tagatose-1,6-bisphosphate aldolase subunit KbaZ (426 aa).

This sequence belongs to the GatZ/KbaZ family. KbaZ subfamily. In terms of assembly, forms a complex with KbaY.

It participates in carbohydrate metabolism; D-tagatose 6-phosphate degradation; D-glyceraldehyde 3-phosphate and glycerone phosphate from D-tagatose 6-phosphate: step 2/2. Component of the tagatose-1,6-bisphosphate aldolase KbaYZ that is required for full activity and stability of the Y subunit. Could have a chaperone-like function for the proper and stable folding of KbaY. When expressed alone, KbaZ does not show any aldolase activity. The polypeptide is D-tagatose-1,6-bisphosphate aldolase subunit KbaZ (Escherichia coli (strain K12 / MC4100 / BW2952)).